Reading from the N-terminus, the 495-residue chain is Glutamyl-tRNA(Gln) amidotransferase subunit A (495 aa).

Active-site charge relay system residues include K75 and S150. The active-site Acyl-ester intermediate is S174.

The protein belongs to the amidase family. GatA subfamily. As to quaternary structure, heterotrimer of A, B and C subunits.

The enzyme catalyses L-glutamyl-tRNA(Gln) + L-glutamine + ATP + H2O = L-glutaminyl-tRNA(Gln) + L-glutamate + ADP + phosphate + H(+). Allows the formation of correctly charged Gln-tRNA(Gln) through the transamidation of misacylated Glu-tRNA(Gln) in organisms which lack glutaminyl-tRNA synthetase. The reaction takes place in the presence of glutamine and ATP through an activated gamma-phospho-Glu-tRNA(Gln). In Paraburkholderia phytofirmans (strain DSM 17436 / LMG 22146 / PsJN) (Burkholderia phytofirmans), this protein is Glutamyl-tRNA(Gln) amidotransferase subunit A.